A 114-amino-acid polypeptide reads, in one-letter code: Histone H3-5 (114 aa).

A disordered region spans residues 1 to 29 (NTGAKAPRKQLANKAARKSTNVNAVSGVK).

It belongs to the histone H3 family. The nucleosome is a histone octamer containing two molecules each of H2A, H2B, H3 and H4 assembled in one H3-H4 heterotetramer and two H2A-H2B heterodimers. The octamer wraps approximately 147 bp of DNA.

The protein localises to the nucleus. The protein resides in the chromosome. Functionally, core component of nucleosome. Nucleosomes wrap and compact DNA into chromatin, limiting DNA accessibility to the cellular machineries which require DNA as a template. Histones thereby play a central role in transcription regulation, DNA repair, DNA replication and chromosomal stability. DNA accessibility is regulated via a complex set of post-translational modifications of histones, also called histone code, and nucleosome remodeling. The chain is Histone H3-5 (H3-5) from Stylonychia lemnae (Ciliate).